Reading from the N-terminus, the 854-residue chain is MVQRWLYSTNAKDIAVLYFMLAIFSGMAGTAMSLIIRLELAAPGSQYLHGNSQLFNVLVVGHAVLMIFCAPFRLIYHCIEVLIDKHISVYSINENFTVSFWFWLLVVTYMVFRYVNHMAYPVGANSTGTMACHKSAGVKQPAQGKNCPMARLTNSCKECLGFSLTPSHLGIVIHAYVLEEEVHELTKNESLALSKSWHLEGCTSSNGKLRNTGLSERGNPGDNGVFMVPKFNLNKVRYFSTLSKLNARKEDSLAYLTKINTTDFSELNKLMENNHNKTETINTRILKLMSDIRMLLIAYNKIKSKKGNMSKGSNNITLDGINISYLNKLSKDINTNMFKFSPVRRVEIPKTSGGFRPLSVGNPREKIVQESMRMMLEIIYNNSFSYYSHGFRPNLSCLTAIIQCKNYMQYCNWFIKVDLNKCFDTIPHNMLINVLNERIKDKGFMDLLYKLLRAGYVDKNNNYHNTTLGIPQGSVVSPILCNIFLDKLDKYLENKFENEFNTGNMSNRGRNPIYNSLSSKIYRCKLLSEKLKLIRLRDHYQRNMGSDKSFKRAYFVRYADDIIIGVMGSHNDCKNILNDINNFLKENLGMSINMDKSVIKHSKEGVSFLGYDVKVTPWEKRPYRMIKKGDNFIRVRHHTSLVVNAPIRSIVMKLNKHGYCSHGILGKPRGVGRLIHEEMKTILMHYLAVGRGIMNYYRLATNFTTLRGRITYILFYSCCLTLARKFKLNTVKKVILKFGKVLVDPHSKVSFSIDDFKIRHKMNMTDSNYTPDEILDRYKYMLPRSLSLFSGICQICGSKHDLEVHHVRTLNNAANKIKDDYLLGRMIKMNRKQITICKTCHFKVHQGKYNGPGL.

The 285-residue stretch at 329 to 613 (LSKDINTNMF…EGVSFLGYDV (285 aa)) folds into the Reverse transcriptase domain.

Its subcellular location is the mitochondrion. This Saccharomyces cerevisiae (strain ATCC 204508 / S288c) (Baker's yeast) protein is Putative COX1/OXI3 intron 2 protein (AI2).